Consider the following 240-residue polypeptide: Probable septum site-determining protein MinC (240 aa).

The protein belongs to the MinC family. Interacts with MinD and FtsZ.

Functionally, cell division inhibitor that blocks the formation of polar Z ring septums. Rapidly oscillates between the poles of the cell to destabilize FtsZ filaments that have formed before they mature into polar Z rings. Prevents FtsZ polymerization. In Acinetobacter baumannii (strain AYE), this protein is Probable septum site-determining protein MinC.